The sequence spans 597 residues: Phosphomethylpyrimidine synthase (597 aa).

Residues N207, M236, Y265, H301, 321–323, 362–365, and E401 each bind substrate; these read SRG and DGLR. Residue H405 participates in Zn(2+) binding. A substrate-binding site is contributed by Y428. H469 contributes to the Zn(2+) binding site. C549, C552, and C557 together coordinate [4Fe-4S] cluster.

Belongs to the ThiC family. In terms of assembly, homodimer. It depends on [4Fe-4S] cluster as a cofactor.

It catalyses the reaction 5-amino-1-(5-phospho-beta-D-ribosyl)imidazole + S-adenosyl-L-methionine = 4-amino-2-methyl-5-(phosphooxymethyl)pyrimidine + CO + 5'-deoxyadenosine + formate + L-methionine + 3 H(+). Its pathway is cofactor biosynthesis; thiamine diphosphate biosynthesis. Its function is as follows. Catalyzes the synthesis of the hydroxymethylpyrimidine phosphate (HMP-P) moiety of thiamine from aminoimidazole ribotide (AIR) in a radical S-adenosyl-L-methionine (SAM)-dependent reaction. This is Phosphomethylpyrimidine synthase from Gluconobacter oxydans (strain 621H) (Gluconobacter suboxydans).